Here is a 375-residue protein sequence, read N- to C-terminus: MFLRSVQLHDFRNYAEADLELTSPKTILVGDNAQGKSNLLEAVQLLATGRSTRALRDRELIARGKEQARVAATVERLGDTVELEMILRAGKRRTVRVGGETRRTQVEALGYLHCVSFSSLDLDLVRGAPETRRDWLDGILLQLEPVYTNVLAQFVQALHQRNALLRSTELSPDALAEQLPCWDDLLVRAATPVMRRRHRLIERLAPLARRWHGSISGGRETFAVRYQPQISFEQEDAQSVQQALQELLKEKRTLEGRRGTSLVGPHRDEVDLSIDEIPARQFGSQGQQRTLVLALKLAELELLEQVTGEVPLLLLDDVLAELDLHRQDQLLGAIQERVQTIVTTTHLSLFDSQWLQSATVLTIEKGRIGSPPAPA.

ATP is bound at residue 30–37 (GDNAQGKS).

Belongs to the RecF family.

It is found in the cytoplasm. In terms of biological role, the RecF protein is involved in DNA metabolism; it is required for DNA replication and normal SOS inducibility. RecF binds preferentially to single-stranded, linear DNA. It also seems to bind ATP. This is DNA replication and repair protein RecF from Gloeobacter violaceus (strain ATCC 29082 / PCC 7421).